Here is a 501-residue protein sequence, read N- to C-terminus: Cytochrome P450 monooxygenase janQ (501 aa).

Residues M1–R16 traverse the membrane as a helical segment. N-linked (GlcNAc...) asparagine glycosylation is present at N132. Position 439 (C439) interacts with heme.

Belongs to the cytochrome P450 family. Requires heme as cofactor.

Its subcellular location is the membrane. It functions in the pathway secondary metabolite biosynthesis. Functionally, cytochrome P450 monooxygenase; part of the gene cluster that mediates the biosynthesis of the indole diterpenes janthitremanes such as shearinine K or shearinine A. The geranylgeranyl diphosphate (GGPP) synthase janG catalyzes the first step in janthitremane biosynthesis via conversion of farnesyl pyrophosphate and isopentyl pyrophosphate into geranylgeranyl pyrophosphate (GGPP). Condensation of indole-3-glycerol phosphate with GGPP by the prenyl transferase janC then forms 3-geranylgeranylindole (3-GGI). Epoxidation by the FAD-dependent monooxygenase janM leads to a epoxidized-GGI that is substrate of the terpene cyclase janB for cyclization to yield paspaline. Paspaline is subsequently converted to 13-desoxypaspaline by the cytochrome P450 monooxygenase janP, via beta-PC-M6 in a series of alpha-face oxidations. The cytochrome P450 monooxygenase janQ is proposed to carry out sequential beta-face oxidation steps at C-7 and C-13 of 13-desoxypaspaline to form paspalicine and paspalinine respectively. The indole diterpene prenyltransferase janD may then convert paspalinine into shearinine K which is substrate of janO and/or additional enzymes for oxidation and cyclization to generate shearinine A. The sequence is that of Cytochrome P450 monooxygenase janQ from Penicillium janthinellum (Penicillium vitale).